The primary structure comprises 345 residues: Phosphoribosylformylglycinamidine cyclo-ligase (345 aa).

It belongs to the AIR synthase family.

The protein resides in the cytoplasm. It catalyses the reaction 2-formamido-N(1)-(5-O-phospho-beta-D-ribosyl)acetamidine + ATP = 5-amino-1-(5-phospho-beta-D-ribosyl)imidazole + ADP + phosphate + H(+). It participates in purine metabolism; IMP biosynthesis via de novo pathway; 5-amino-1-(5-phospho-D-ribosyl)imidazole from N(2)-formyl-N(1)-(5-phospho-D-ribosyl)glycinamide: step 2/2. The sequence is that of Phosphoribosylformylglycinamidine cyclo-ligase from Shewanella sp. (strain ANA-3).